The sequence spans 347 residues: Spermidine/putrescine import ATP-binding protein PotA (347 aa).

Residues 6–238 (LEIKNLSHYY…PKTKFVADFI (233 aa)) enclose the ABC transporter domain. 40–47 (GPSGCGKT) contributes to the ATP binding site.

It belongs to the ABC transporter superfamily. Spermidine/putrescine importer (TC 3.A.1.11.1) family. In terms of assembly, the complex is composed of two ATP-binding proteins (PotA), two transmembrane proteins (PotB and PotC) and a solute-binding protein (PotD).

It is found in the cell inner membrane. The catalysed reaction is ATP + H2O + polyamine-[polyamine-binding protein]Side 1 = ADP + phosphate + polyamineSide 2 + [polyamine-binding protein]Side 1.. Functionally, part of the ABC transporter complex PotABCD involved in spermidine/putrescine import. Responsible for energy coupling to the transport system. The sequence is that of Spermidine/putrescine import ATP-binding protein PotA from Borreliella afzelii (strain PKo) (Borrelia afzelii).